A 143-amino-acid chain; its full sequence is uncharacterized protein (143 aa).

Positions 13 to 143 are disordered; that stretch reads SLQFPHHRPG…QDAAHQCRIQ (131 aa). Basic residues predominate over residues 17–31; the sequence is PHHRPGLRRHRKNTT. Basic and acidic residues-rich tracts occupy residues 35–48, 84–96, and 112–133; these read AAVDRPRRTRRGDA, DGREASRTAAEEK, and EKQHVGQDPDANGNHDDDDHAG. Positions 134 to 143 are enriched in low complexity; sequence QDAAHQCRIQ.

This is an uncharacterized protein from Homo sapiens (Human).